The chain runs to 513 residues: Keratin, type II cuticular Hb2 (513 aa).

Residues M1–E120 form a head region. The 312-residue stretch at E120 to L431 folds into the IF rod domain. The coil 1A stretch occupies residues K121–M155. The interval Q156–I165 is linker 1. Residues E166–S266 are coil 1B. The interval Q267–L283 is linker 12. The interval D284 to E427 is coil 2. Positions E428–H513 are tail.

It belongs to the intermediate filament family. Heterotetramer of two type I and two type II keratins.

This is Keratin, type II cuticular Hb2 (KRT82) from Homo sapiens (Human).